Consider the following 317-residue polypeptide: MGNRHAKERSHHHGFDADRDAKKLYKACKGMGTDEAAIIEVLSSRTSEERQQIKQKYKEKYGKDLEEVLNSELSGNFKKTALALLDRPNEYAARQLQKAMKGVGTDEAMLIEILCTRSNKEIVAIKEAYQRLFGRSLESDVKEDTSGNLRKILVSLLQASRDEEDTVDKELAGQDAKDLYDAGEGRWGTDELAFNEVLAKRSYKQLRATFQAYQILIGKDMEETIEEETSGDLKKAYLTIVRCAQDLEGYFADLLYKAMKGMGTDEETLIRIIVTRAEVDLQGIKAKFQEKYQKSLSDMVHSDTSGDFRKLLVALLH.

A lipid anchor (N-myristoyl glycine) is attached at Gly-2. Annexin repeat units lie at residues 15-86 (FDAD…ALLD), 87-158 (RPNE…SLLQ), 170-242 (ELAG…TIVR), and 246-317 (DLEG…ALLH).

It belongs to the annexin family. In terms of assembly, monomer and homodimer. Detected on the tips of microvilli in small intestine (at protein level).

The protein resides in the apical cell membrane. Its subcellular location is the cell membrane. It localises to the cytoplasmic vesicle. Functionally, binds to membranes enriched in phosphatidylserine or phosphatidylglycerol in a calcium-dependent manner. Half-maximal membrane binding requires about 60 uM calcium. Does not bind to membranes that lack phospholipids with an acidic headgroup. The protein is Annexin A13 (Anxa13) of Mus musculus (Mouse).